A 404-amino-acid chain; its full sequence is Propionate kinase (404 aa).

Belongs to the acetokinase family. PduW subfamily.

The protein localises to the cytoplasm. It catalyses the reaction propanoate + ATP = propanoyl phosphate + ADP. Its pathway is polyol metabolism; 1,2-propanediol degradation. Works with phosphate acetyltransferase (pta) to capture exogenous propionate and regenerate propionyl-CoA during degradation of 1,2-propanediol (1,2-PD). The chain is Propionate kinase from Klebsiella pneumoniae (strain 342).